Consider the following 1063-residue polypeptide: Structural polyprotein (1063 aa).

Residues 23–131 form a disordered region; the sequence is LRAELAAGAS…LGPPTNPFQA (109 aa). The tract at residues 30–69 is human C1QBP/SF2P32-binding; the sequence is GASQLRRPRPPRQRDSSTSGDDSGRDSGGPRRRRGNRGRG. S46 carries the post-translational modification Phosphoserine; by host. Basic residues predominate over residues 59–69; that stretch reads PRRRRGNRGRG. The span at 70 to 87 shows a compositional bias: basic and acidic residues; it reads QRKDWSKAPPPPEERQES. Positions 93-107 are enriched in pro residues; it reads APKPPRAPPQPPQPP. An intrachain disulfide couples C153 to C197. The segment at 279 to 300 is functions as E2 signal peptide; that stretch reads GAPQVFLAGLLLAAVAVGTARA. Residues 301–534 lie on the Extracellular side of the membrane; the sequence is GLQPRTDIAA…LWLATANALS (234 aa). The tract at residues 305–327 is disordered; that stretch reads RTDIAAPPAPPQAPRAHGKHYGH. Residues N353, N371, N410, and N429 are each glycosylated (N-linked (GlcNAc...) asparagine; by host). Residues 535–555 traverse the membrane as a helical segment; the sequence is LDHALAAVVLLVPWVLIFMLC. Residues 556 to 582 are Cytoplasmic-facing; that stretch reads RRACRRRGAAAALTAVVLQGYNPPAYG. The tract at residues 563-582 is functions as E1 signal peptide; it reads GAAAALTAVVLQGYNPPAYG. Over 583–1028 the chain is Extracellular; sequence EEAFTYLCTA…QTWAEWAAAH (446 aa). Cystine bridges form between C590–C595, C619–C824, C641–C653, C699–C712, C758–C767, C807–C817, C931–C934, and C950–C983. N658 carries an N-linked (GlcNAc...) asparagine; by host glycan. Residues N670 and A671 each contribute to the Ca(2+) site. Residues D718 and T719 each contribute to the Ca(2+) site. N-linked (GlcNAc...) asparagine; by host glycans are attached at residues N759 and N791. Residues T1011 and T1012 are each glycosylated (O-linked (GalNAc...) threonine; by host). Residues 1029-1049 traverse the membrane as a helical segment; it reads WWQLTLGAICALLLAGLLACC. Residues 1050-1063 lie on the Extracellular side of the membrane; the sequence is AKCLYYLRGAIAPR.

As to quaternary structure, homodimer; further assembles into homooligomer. Interacts with human C1QBP. Interacts (via N-terminus) with protease/methyltransferase p150. Heterodimer with spike glycoprotein E2. In terms of assembly, heterodimer with spike glycoprotein E1. In terms of processing, structural polyprotein: Specific enzymatic cleavages in vivo yield mature proteins. Two signal peptidase-mediated cleavages within the polyprotein produce the structural proteins capsid, E2, and E1. The E2 signal peptide remains attached to the C-terminus of the capsid protein after cleavage by the signal peptidase. Another signal peptide at E2 C-terminus directs E1 to the ER, with a similar mechanism. Contains three N-linked oligosaccharides. Post-translationally, capsid is phosphorylated on Ser-46 by host. This phosphorylation negatively regulates capsid protein RNA-binding activity. Dephosphorylated by human PP1A.

It localises to the virion. Its subcellular location is the host cytoplasm. It is found in the host mitochondrion. The protein localises to the virion membrane. The protein resides in the host Golgi apparatus membrane. Functionally, capsid protein interacts with genomic RNA and assembles into icosahedric core particles 65-70 nm in diameter. The resulting nucleocapsid eventually associates with the cytoplasmic domain of E2 at the cell membrane, leading to budding and formation of mature virions from host Golgi membranes. Phosphorylation negatively regulates RNA-binding activity, possibly delaying virion assembly during the viral replication phase. Capsid protein dimerizes and becomes disulfide-linked in the virion. Modulates genomic RNA replication. Modulates subgenomic RNA synthesis by interacting with human C1QBP/SF2P32. Induces both perinuclear clustering of mitochondria and the formation of electron-dense intermitochondrial plaques, both hallmarks of rubella virus infected cells. Induces apoptosis when expressed in transfected cells. In terms of biological role, responsible for viral attachment to target host cell, by binding to the cell receptor. Its transport to the plasma membrane depends on interaction with E1 protein. The surface glycoproteins display an irregular helical organization and a pseudo-tetrameric inner nucleocapsid arrangement. Class II viral fusion protein. Fusion activity is inactive as long as E1 is bound to E2 in mature virion. After virus attachment to target cell and clathrin-mediated endocytosis, acidification of the endosome would induce dissociation of E1/E2 heterodimer and concomitant trimerization of the E1 subunits. This E1 homotrimer is fusion active, and promotes release of viral nucleocapsid in cytoplasm after endosome and viral membrane fusion. The cytoplasmic tail of spike glycoprotein E1 modulates virus release. The surface glycoproteins display an irregular helical organization and a pseudo-tetrameric inner nucleocapsid arrangement. In Rubella virus (strain BRD1) (RUBV), this protein is Structural polyprotein.